The primary structure comprises 493 residues: tRNA(Ile)-lysidine synthase, chloroplastic (493 aa).

68-73 contributes to the ATP binding site; the sequence is SGGQDS.

Belongs to the tRNA(Ile)-lysidine synthase family.

The protein localises to the plastid. It localises to the chloroplast. It carries out the reaction cytidine(34) in tRNA(Ile2) + L-lysine + ATP = lysidine(34) in tRNA(Ile2) + AMP + diphosphate + H(+). Its function is as follows. Ligates lysine onto the cytidine present at position 34 of the AUA codon-specific tRNA(Ile) that contains the anticodon CAU, in an ATP-dependent manner. Cytidine is converted to lysidine, thus changing the amino acid specificity of the tRNA from methionine to isoleucine. The chain is tRNA(Ile)-lysidine synthase, chloroplastic from Staurastrum punctulatum (Green alga).